A 385-amino-acid chain; its full sequence is 1-deoxy-D-xylulose 5-phosphate reductoisomerase (385 aa).

NADPH contacts are provided by Thr-11, Gly-12, Ser-13, Ile-14, Ala-37, Arg-38, Asn-39, and Asn-123. Position 124 (Lys-124) interacts with 1-deoxy-D-xylulose 5-phosphate. Glu-125 is an NADPH binding site. Asp-149 serves as a coordination point for Mn(2+). 1-deoxy-D-xylulose 5-phosphate contacts are provided by Ser-150, Glu-151, Ser-173, and His-196. Residue Glu-151 participates in Mn(2+) binding. Gly-202 contacts NADPH. 1-deoxy-D-xylulose 5-phosphate contacts are provided by Ser-209, Asn-214, Lys-215, and Glu-218. Glu-218 contacts Mn(2+).

Belongs to the DXR family. It depends on Mg(2+) as a cofactor. Requires Mn(2+) as cofactor.

The catalysed reaction is 2-C-methyl-D-erythritol 4-phosphate + NADP(+) = 1-deoxy-D-xylulose 5-phosphate + NADPH + H(+). Its pathway is isoprenoid biosynthesis; isopentenyl diphosphate biosynthesis via DXP pathway; isopentenyl diphosphate from 1-deoxy-D-xylulose 5-phosphate: step 1/6. In terms of biological role, catalyzes the NADPH-dependent rearrangement and reduction of 1-deoxy-D-xylulose-5-phosphate (DXP) to 2-C-methyl-D-erythritol 4-phosphate (MEP). The polypeptide is 1-deoxy-D-xylulose 5-phosphate reductoisomerase (Moorella thermoacetica (strain ATCC 39073 / JCM 9320)).